Here is a 211-residue protein sequence, read N- to C-terminus: WAP four-disulfide core domain protein 1 (211 aa).

The N-terminal stretch at 1–23 (MGNCGRKVLRALSFLLLLGSSSA) is a signal peptide. In terms of domain architecture, WAP spans 50-99 (RQPHADRCPPPPRTLPPGACQATRCQADSECPRHRRCCYNGCAYACLEAV). 4 disulfides stabilise this stretch: cysteine 57–cysteine 87, cysteine 69–cysteine 91, cysteine 74–cysteine 86, and cysteine 80–cysteine 95. Basic and acidic residues predominate over residues 182-198 (VLRQRLHKEYPEGDSKN). The tract at residues 182-211 (VLRQRLHKEYPEGDSKNVAEPGKGQQRHFP) is disordered.

The protein localises to the secreted. Its function is as follows. Has growth inhibitory activity. The protein is WAP four-disulfide core domain protein 1 (Wfdc1) of Mus musculus (Mouse).